The following is a 736-amino-acid chain: Segment polarity protein dishevelled homolog DVL-2 (736 aa).

Residues 11–93 enclose the DIX domain; the sequence is VGETKVIYHL…RVVSWLVSSD (83 aa). The interval 93 to 255 is disordered; it reads DTPQPEVAPP…RMERTSSFSS (163 aa). Residues 111–122 show a composition bias toward pro residues; that stretch reads VPPPPPLPPLPP. Over residues 159–171 the composition is skewed to basic and acidic residues; it reads LRRDRPRRRDSSE. A compositionally biased stretch (low complexity) spans 193 to 208; it reads ESSSTLMTSELESTSL. Residue serine 211 is modified to Phosphoserine. Positions 218 to 230 are enriched in polar residues; that stretch reads SRFSSSTEQSSAS. A compositionally biased stretch (basic residues) spans 232–244; that stretch reads LLKRHRRRRKQRP. One can recognise a PDZ domain in the interval 267-339; sequence TVTLNMEKYN…NDDAVRVLRD (73 aa). Residues 433-507 form the DEP domain; the sequence is PESGLEVRDR…SEQCYYVFGD (75 aa). Positions 558–568 are enriched in pro residues; the sequence is PHPYSPQPPPY. The interval 558 to 665 is disordered; that stretch reads PHPYSPQPPP…PNLRALPGLH (108 aa). Low complexity-rich tracts occupy residues 581 to 598 and 614 to 629; these read ASSQ…TRSD and SKSG…SRGG.

The protein belongs to the DSH family. In terms of assembly, interacts through its PDZ domain with the C-terminal regions of VANGL1 and VANGL2. Interacts with Rac. Interacts with ARRB1; the interaction is enhanced by phosphorylation of DVL1. Can form large oligomers (via DIX domain). Interacts (via DIX domain) with DIXDC1 (via DIX domain). Interacts (via DEP domain) with AP2M1 and the AP-2 complex. Interacts with FAM105B/otulin. Interacts with DCDC2. Interacts (when phosphorylated) with FOXK1 and FOXK2; the interaction induces DVL2 nuclear translocation. Interacts with MAPK15. Interacts with PKD1 (via extracellular domain). Interacts with LMBR1L. Post-translationally, phosphorylated by CSNK1D. WNT3A induces DVL2 phosphorylation by CSNK1E and MARK kinases. Ubiquitinated via 'Lys-63'-linked polyubiquitin chains; leading to its autophagy-mediated degradation. In terms of tissue distribution, ubiquitous.

It is found in the cell membrane. The protein localises to the cytoplasm. The protein resides in the cytosol. It localises to the cytoplasmic vesicle. Its subcellular location is the nucleus. In terms of biological role, plays a role in the signal transduction pathways mediated by multiple Wnt genes. Participates both in canonical and non-canonical Wnt signaling by binding to the cytoplasmic C-terminus of frizzled family members and transducing the Wnt signal to down-stream effectors. Promotes internalization and degradation of frizzled proteins upon Wnt signaling. The sequence is that of Segment polarity protein dishevelled homolog DVL-2 (Dvl2) from Mus musculus (Mouse).